We begin with the raw amino-acid sequence, 504 residues long: ATP synthase subunit alpha, chloroplastic (504 aa).

169–176 (GDRQTGKT) serves as a coordination point for ATP.

It belongs to the ATPase alpha/beta chains family. In terms of assembly, F-type ATPases have 2 components, CF(1) - the catalytic core - and CF(0) - the membrane proton channel. CF(1) has five subunits: alpha(3), beta(3), gamma(1), delta(1), epsilon(1). CF(0) has four main subunits: a, b, b' and c.

The protein localises to the plastid. It localises to the chloroplast thylakoid membrane. The enzyme catalyses ATP + H2O + 4 H(+)(in) = ADP + phosphate + 5 H(+)(out). In terms of biological role, produces ATP from ADP in the presence of a proton gradient across the membrane. The alpha chain is a regulatory subunit. This is ATP synthase subunit alpha, chloroplastic from Stigeoclonium helveticum (Green alga).